A 128-amino-acid chain; its full sequence is Glycine cleavage system H protein (128 aa).

Positions 24-106 (VATVGITAFA…YNNGWLLKIK (83 aa)) constitute a Lipoyl-binding domain. At lysine 65 the chain carries N6-lipoyllysine.

The protein belongs to the GcvH family. In terms of assembly, the glycine cleavage system is composed of four proteins: P, T, L and H. Requires (R)-lipoate as cofactor.

Its function is as follows. The glycine cleavage system catalyzes the degradation of glycine. The H protein shuttles the methylamine group of glycine from the P protein to the T protein. The chain is Glycine cleavage system H protein from Acaryochloris marina (strain MBIC 11017).